Here is an 828-residue protein sequence, read N- to C-terminus: MKLSRRSFMKANAVAAVAAAAGLSVPGVARAVVGQQEAIKWDKAPCRFCGTGCGVLVGTQQGRVVACQGDPDAPVNRGLNCIKGYFLPKIMYGKDRLTQPLLRMKNGKYDKEGEFTLITWDQAFDVMEEKFKTALKEKGPESIGMFGSGQWTIWEGYAASKLFKAGFRSNNIDPNARHCMASAVVGFMRTFGMDEPMGCYDDIEQADAFVLWGANMAEMHPILWSRITNRRLSNQNVTVAVLSTYQHRSFELADNGIIFTPQSDLVILNYIANYIIQNNAINQDFFSKHVNLRKGATDIGYGLRPTHPLEKAAKNPGSDASEPMSFEDYKAFVAEYTLEKTAEMTGVPKDQLEQLAQLYADPNKKVISYWTMGFNQHTRGVWANNLVYNLHLLTGKISQPGCGPFSLTGQPSACGTAREVGTFAHRLPADMVVTNEKHRDICEKKWNIPSGTIPAKIGLHAVAQDRALKDGKLNVYWTMCTNNMQAGPNINEERMPGWRDPRNFIIVSDPYPTVSALAADLILPTAMWVEKEGAYGNAERRTQFWRQQVQAPGEAKSDLWQLVQFSRRFKTEEVWPEDLLAKKPELRGKTLYEVLYATPEVSKFPVSELAEDQLNDESRELGFYLQKGLFEEYAWFGRGHGHDLAPFDDYHKARGLRWPVVNGKETQWRYSEGNDPYVKAGEGYKFYGKPDGKAVIFALPFEPAAEAPDEEYDLWLSTGRVLEHWHTGSMTRRVPELHRAFPEAVLFIHPLDAKARDLRRGDKVKVVSRRGEVISIVETRGRNRPPQGLVYMPFFDAAQLVNKLTQDATDPLSKETDFKKCAVKLEKV.

The segment at residues 1 to 31 is a signal peptide (tat-type signal); the sequence is MKLSRRSFMKANAVAAVAAAAGLSVPGVARA. In terms of domain architecture, 4Fe-4S Mo/W bis-MGD-type spans 39 to 95; the sequence is IKWDKAPCRFCGTGCGVLVGTQQGRVVACQGDPDAPVNRGLNCIKGYFLPKIMYGKD. [4Fe-4S] cluster contacts are provided by cysteine 46, cysteine 49, cysteine 53, and cysteine 81. Mo-bis(molybdopterin guanine dinucleotide) contacts are provided by residues lysine 83, glutamine 150, asparagine 175, cysteine 179, 212-219, 243-247, 262-264, methionine 372, glutamine 376, asparagine 482, 508-509, lysine 531, aspartate 558, and 718-727; these read WGANMAEM, STYQH, QSD, SD, and TGRVLEHWHT. Phenylalanine 794 is a binding site for substrate. Residues asparagine 802 and lysine 819 each contribute to the Mo-bis(molybdopterin guanine dinucleotide) site.

The protein belongs to the prokaryotic molybdopterin-containing oxidoreductase family. NasA/NapA/NarB subfamily. Component of the periplasmic nitrate reductase NapAB complex composed of NapA and NapB. [4Fe-4S] cluster is required as a cofactor. Requires Mo-bis(molybdopterin guanine dinucleotide) as cofactor. Predicted to be exported by the Tat system. The position of the signal peptide cleavage has not been experimentally proven.

It is found in the periplasm. The enzyme catalyses 2 Fe(II)-[cytochrome] + nitrate + 2 H(+) = 2 Fe(III)-[cytochrome] + nitrite + H2O. In terms of biological role, catalytic subunit of the periplasmic nitrate reductase complex NapAB. Receives electrons from NapB and catalyzes the reduction of nitrate to nitrite. This is Periplasmic nitrate reductase from Shigella boydii serotype 4 (strain Sb227).